A 233-amino-acid polypeptide reads, in one-letter code: Large ribosomal subunit protein uL1 (233 aa).

This sequence belongs to the universal ribosomal protein uL1 family. Part of the 50S ribosomal subunit.

Functionally, binds directly to 23S rRNA. The L1 stalk is quite mobile in the ribosome, and is involved in E site tRNA release. In terms of biological role, protein L1 is also a translational repressor protein, it controls the translation of the L11 operon by binding to its mRNA. The polypeptide is Large ribosomal subunit protein uL1 (Pelobacter propionicus (strain DSM 2379 / NBRC 103807 / OttBd1)).